The chain runs to 221 residues: ATP-dependent dethiobiotin synthetase BioD (221 aa).

13–18 (DIGKTY) is an ATP binding site. Thr-17 is a Mg(2+) binding site. Lys-38 is a catalytic residue. Position 42 (Ser-42) interacts with substrate. ATP-binding positions include Asp-51, 112-115 (EGSG), and 176-177 (NR). Mg(2+)-binding residues include Asp-51 and Glu-112.

It belongs to the dethiobiotin synthetase family. In terms of assembly, homodimer. The cofactor is Mg(2+).

It localises to the cytoplasm. It catalyses the reaction (7R,8S)-7,8-diammoniononanoate + CO2 + ATP = (4R,5S)-dethiobiotin + ADP + phosphate + 3 H(+). Its pathway is cofactor biosynthesis; biotin biosynthesis; biotin from 7,8-diaminononanoate: step 1/2. Functionally, catalyzes a mechanistically unusual reaction, the ATP-dependent insertion of CO2 between the N7 and N8 nitrogen atoms of 7,8-diaminopelargonic acid (DAPA, also called 7,8-diammoniononanoate) to form a ureido ring. The sequence is that of ATP-dependent dethiobiotin synthetase BioD from Brachyspira hyodysenteriae (strain ATCC 49526 / WA1).